The primary structure comprises 664 residues: DNA ligase (664 aa).

NAD(+) contacts are provided by residues 32–36, 81–82, and glutamate 113; these read DAEYD and SL. The active-site N6-AMP-lysine intermediate is the lysine 115. The NAD(+) site is built by arginine 136, glutamate 173, lysine 289, and lysine 313. The Zn(2+) site is built by cysteine 407, cysteine 410, cysteine 425, and cysteine 431. Residues 586 to 664 form the BRCT domain; it reads ASEQPFAGKT…EEQLQAALQS (79 aa).

It belongs to the NAD-dependent DNA ligase family. LigA subfamily. Mg(2+) serves as cofactor. The cofactor is Mn(2+).

The catalysed reaction is NAD(+) + (deoxyribonucleotide)n-3'-hydroxyl + 5'-phospho-(deoxyribonucleotide)m = (deoxyribonucleotide)n+m + AMP + beta-nicotinamide D-nucleotide.. DNA ligase that catalyzes the formation of phosphodiester linkages between 5'-phosphoryl and 3'-hydroxyl groups in double-stranded DNA using NAD as a coenzyme and as the energy source for the reaction. It is essential for DNA replication and repair of damaged DNA. This chain is DNA ligase, found in Aeromonas salmonicida (strain A449).